We begin with the raw amino-acid sequence, 780 residues long: Cation channel sperm-associated protein 1 (780 aa).

3 disordered regions span residues 1–37 (MDQNSVPEKAQNEADTNNADRFFRSHSSPPHHRPGHS), 71–306 (LSSH…QDHH), and 376–412 (QMSKKVHTQDISTKHSEDWGKEEGQFQKRKTGRLQRT). Residues 1 to 447 (MDQNSVPEKA…EMIRNLTQSL (447 aa)) are Cytoplasmic-facing. Residues 110–122 (SYGEDYHDELQRD) are compositionally biased toward basic and acidic residues. The segment covering 211–241 (QVPHRGWPHHHQVHHHGRSRHHEAHQHGKSP) has biased composition (basic residues). Positions 261–284 (SDYHSEYHQGDHHPSEYHHGDHPH) are enriched in basic and acidic residues. The segment covering 285–299 (HTQHHYHQTHRHRDY) has biased composition (basic residues). The span at 387-401 (STKHSEDWGKEEGQF) shows a compositional bias: basic and acidic residues. The span at 402–412 (QKRKTGRLQRT) shows a compositional bias: basic residues. The helical transmembrane segment at 448 to 469 (AFETFIFFVVCLNTVMLVAQTF) threads the bilayer. Residues 470 to 478 (AEVEIRGEW) are Extracellular-facing. A helical membrane pass occupies residues 479-500 (YFMALDSIFFCIYVVEALLKII). Topologically, residues 501–508 (ALGLSYFF) are cytoplasmic. A helical membrane pass occupies residues 509 to 531 (DFWNNLDFFIMAMAVLDFLLMQT). The Extracellular segment spans residues 532-540 (HSFAIYHQS). The helical transmembrane segment at 541–563 (LFRILKVFKSLRALRAIRVLRRL) threads the bilayer. The Cytoplasmic portion of the chain corresponds to 564–581 (SFLTSVQEVTGTLGQSLP). A helical transmembrane segment spans residues 582-604 (SIAAILILMFTCLFLFSAVLRAL). Topologically, residues 605–615 (FRKSDPKRFQN) are extracellular. An intramembrane region (helical; Pore-forming) is located at residues 616–628 (IFTTIFTLFTLLT). The Extracellular segment spans residues 629-645 (LDDWSLIYMDSRAQGAW). Residues 646–671 (YIIPILVIYIIIQYFIFLNLVITVLV) form a helical membrane-spanning segment. At 672 to 780 (DSFQTALFKG…FEAGEEDFRN (109 aa)) the chain is on the cytoplasmic side.

This sequence belongs to the cation channel sperm-associated (TC 1.A.1.19) family. Component of the CatSper complex or CatSpermasome composed of the core pore-forming members CATSPER1, CATSPER2, CATSPER3 and CATSPER4 as well as auxiliary members CATSPERB, CATSPERG, CATSPERD, CATSPERE, CATSPERZ, C2CD6/CATSPERT, TMEM249, TMEM262 and EFCAB9. HSPA1 may be an additional auxiliary complex member. The core complex members CATSPER1, CATSPER2, CATSPER3 and CATSPER4 form a heterotetrameric channel. The auxiliary CATSPERB, CATSPERG, CATSPERD and CATSPERE subunits form a pavilion-like structure over the pore which stabilizes the complex through interactions with CATSPER4, CATSPER3, CATSPER1 and CATSPER2 respectively. TMEM262/CATSPERH interacts with CATSPERB, further stabilizing the complex. C2CD6/CATSPERT interacts at least with CATSPERD and is required for targeting the CatSper complex in the flagellar membrane. Interacts with Ca(v)3.3/CACNA1I, leading to suppression of T-type calcium channel activity. As to expression, testis-specific.

The protein resides in the cell projection. It localises to the cilium. The protein localises to the flagellum membrane. It carries out the reaction Ca(2+)(in) = Ca(2+)(out). The CatSper calcium channel is indirectly activated by extracellular progesterone and prostaglandins following the sequence: progesterone &gt; PGF1-alpha = PGE1 &gt; PGA1 &gt; PGE2 &gt;&gt; PGD2. The CatSper calcium channel is directly inhibited by endocannabinoid 2-arachidonoylglycerol (2AG). Indirect activation by progesterone takes place via the following mechanism: progesterone binds and activates the acylglycerol lipase ABHD2, which in turn mediates hydrolysis of 2AG inhibitor, relieving inhibition of the CatSper channel. The primary effect of progesterone activation is to shift voltage dependence towards more physiological, negative membrane potentials; it is not mediated by metabotropic receptors and second messengers. Sperm capacitation enhances the effect of progesterone by providing additional negative shift. Also activated by the elevation of intracellular pH. Functionally, pore-forming subunit of the CatSper complex, a sperm-specific voltage-gated calcium channel that plays a central role in calcium-dependent physiological responses essential for successful fertilization, such as sperm hyperactivation, acrosome reaction and chemotaxis towards the oocyte. The chain is Cation channel sperm-associated protein 1 (CATSPER1) from Homo sapiens (Human).